A 650-amino-acid chain; its full sequence is Acetyl-coenzyme A synthetase (650 aa).

Residues 191-194, Thr311, and Asn335 each bind CoA; that span reads RGGR. Residues 387-389, 411-416, Asp500, and Arg515 each bind ATP; these read GEP and DTWWQT. Ser523 lines the CoA pocket. Residue Arg526 coordinates ATP. The Mg(2+) site is built by Val537, His539, and Val542. Arg584 provides a ligand contact to CoA. An N6-acetyllysine modification is found at Lys609.

The protein belongs to the ATP-dependent AMP-binding enzyme family. The cofactor is Mg(2+). Acetylated. Deacetylation by the SIR2-homolog deacetylase activates the enzyme.

It carries out the reaction acetate + ATP + CoA = acetyl-CoA + AMP + diphosphate. Catalyzes the conversion of acetate into acetyl-CoA (AcCoA), an essential intermediate at the junction of anabolic and catabolic pathways. AcsA undergoes a two-step reaction. In the first half reaction, AcsA combines acetate with ATP to form acetyl-adenylate (AcAMP) intermediate. In the second half reaction, it can then transfer the acetyl group from AcAMP to the sulfhydryl group of CoA, forming the product AcCoA. In Shewanella putrefaciens (strain CN-32 / ATCC BAA-453), this protein is Acetyl-coenzyme A synthetase.